Consider the following 475-residue polypeptide: UDP-N-acetylmuramate--L-alanine ligase (475 aa).

Residue 114–120 (GTHGKTT) participates in ATP binding.

Belongs to the MurCDEF family.

It localises to the cytoplasm. The enzyme catalyses UDP-N-acetyl-alpha-D-muramate + L-alanine + ATP = UDP-N-acetyl-alpha-D-muramoyl-L-alanine + ADP + phosphate + H(+). It participates in cell wall biogenesis; peptidoglycan biosynthesis. In terms of biological role, cell wall formation. The sequence is that of UDP-N-acetylmuramate--L-alanine ligase from Bartonella bacilliformis (strain ATCC 35685 / KC583 / Herrer 020/F12,63).